The primary structure comprises 61 residues: Large ribosomal subunit protein eL24 (61 aa).

Residues C7, C10, C33, and C37 each coordinate Zn(2+). Residues C7–C37 form a C4-type zinc finger.

It belongs to the eukaryotic ribosomal protein eL24 family. Part of the 50S ribosomal subunit. Forms a cluster with proteins L3 and L14. It depends on Zn(2+) as a cofactor.

Binds to the 23S rRNA. This is Large ribosomal subunit protein eL24 from Metallosphaera sedula (strain ATCC 51363 / DSM 5348 / JCM 9185 / NBRC 15509 / TH2).